The following is a 492-amino-acid chain: AAA-ATPase At3g28520 (492 aa).

The helical transmembrane segment at 7 to 25 (IWGFTSTTMASIMFLWPMY) threads the bilayer. 249-256 (GPPGTGKS) serves as a coordination point for ATP. Disordered stretches follow at residues 313–334 (KKKKEEDEDKEEKKEAENLKRV) and 462–492 (KIEKEARKNKKKAEDNVKQEKQNKVKGMVTK). 2 stretches are compositionally biased toward basic and acidic residues: residues 323-332 (EEKKEAENLK) and 462-484 (KIEKEARKNKKKAEDNVKQEKQN).

This sequence belongs to the AAA ATPase family. BCS1 subfamily. The cofactor is Mg(2+).

It localises to the membrane. It carries out the reaction ATP + H2O = ADP + phosphate + H(+). This chain is AAA-ATPase At3g28520, found in Arabidopsis thaliana (Mouse-ear cress).